Consider the following 263-residue polypeptide: 4-hydroxy-2-oxo-heptane-1,7-dioate aldolase (263 aa).

His45 serves as the catalytic Proton acceptor. Gln147 provides a ligand contact to substrate. An a divalent metal cation-binding site is contributed by Glu149. Residues Ala174 and Asp175 each contribute to the substrate site. Position 175 (Asp175) interacts with a divalent metal cation.

This sequence belongs to the HpcH/HpaI aldolase family. As to quaternary structure, homohexamer; trimer of dimers. Requires a divalent metal cation as cofactor.

It carries out the reaction 4-hydroxy-2-oxoheptanedioate = succinate semialdehyde + pyruvate. It functions in the pathway aromatic compound metabolism; 4-hydroxyphenylacetate degradation; pyruvate and succinate semialdehyde from 4-hydroxyphenylacetate: step 7/7. Catalyzes the reversible retro-aldol cleavage of 4-hydroxy-2-ketoheptane-1,7-dioate (HKHD) to pyruvate and succinic semialdehyde. The sequence is that of 4-hydroxy-2-oxo-heptane-1,7-dioate aldolase from Salmonella newport (strain SL254).